We begin with the raw amino-acid sequence, 1481 residues long: Cystic fibrosis transmembrane conductance regulator (1481 aa).

The Cytoplasmic portion of the chain corresponds to 1 to 77 (MQRSPLEKAS…KLINALRRCF (77 aa)). The helical transmembrane segment at 78-98 (FWRFMFYGILLYLGEVTKAVQ) threads the bilayer. Residues 81 to 365 (FMFYGILLYL…WAVQTWYDSL (285 aa)) enclose the ABC transmembrane type-1 1 domain. The Extracellular segment spans residues 99–122 (PLLLGRIIASYDPDNKEERSIAIY). The helical transmembrane segment at 123 to 146 (LGIGLCLLFIVRTLLLHPAIFGLH) threads the bilayer. Residues 147 to 195 (HIGMQMRIAMFSLIYKKTLKLSSRVLDKISIGQLVSLLSNNLNKFDEGL) lie on the Cytoplasmic side of the membrane. Residues 196 to 216 (ALAHFVWIVPLQVALLMGLIW) form a helical membrane-spanning segment. Over 217-222 (ELLQAS) the chain is Extracellular. Residues 223-243 (AFCGLGFLIVLALFQAGLGRM) traverse the membrane as a helical segment. Topologically, residues 244–298 (MMKYRDQRAGKINERLVITSEMIENIQSVKAYCWEEAMEKMIENLRQTELKLTRK) are cytoplasmic. The chain crosses the membrane as a helical span at residues 299–319 (AAYVRYFNSSAFFFSGFFVVF). Over 320-339 (LSVLPYALIKGIVLRKIFTT) the chain is Extracellular. A helical transmembrane segment spans residues 340–358 (ISFCIVLRMAVTRQFPWAV). The Cytoplasmic portion of the chain corresponds to 359-858 (QTWYDSLGAI…YLRYITVHKS (500 aa)). Residues Trp401, Ser434, 458–465 (GSTGAGKT), and Gln493 contribute to the ATP site. The ABC transporter 1 domain maps to 423-646 (NDDDSLFFSN…RPDFSSKLMG (224 aa)). Cys524 carries S-palmitoyl cysteine lipidation. Ser549 and Ser660 each carry phosphoserine. The interval 654 to 831 (SAERRNSILT…EEINEEDLKE (178 aa)) is disordered R region. Ser670 carries the phosphoserine; by PKA modification. At Ser686 the chain carries Phosphoserine. Lys688 is covalently cross-linked (Glycyl lysine isopeptide (Lys-Gly) (interchain with G-Cter in ubiquitin)). Residues Ser700 and Ser712 each carry the phosphoserine modification. Thr717 is subject to Phosphothreonine. Ser737, Ser753, Ser768, Ser790, Ser795, and Ser813 each carry phosphoserine. Residues 859-879 (LIFVLIWCLVIFLAEVAASLV) form a helical membrane-spanning segment. Residues 859–1155 (LIFVLIWCLV…AVNSSIDVDS (297 aa)) enclose the ABC transmembrane type-1 2 domain. Residues 880 to 918 (VLWFLGNTPPQDKGNSTYSRNNSYAVIITRTSSYYVFYI) lie on the Extracellular side of the membrane. N-linked (GlcNAc...) asparagine glycans are attached at residues Asn894 and Asn900. The discontinuously helical transmembrane segment at 919 to 939 (YVGVADTLLAMGFFRGLPLVH) threads the bilayer. At 940-990 (TLITVSKILHHKMLHSVLQAPMSTLNTLKAGGILNRFSKDIAILDDLLPLT) the chain is on the cytoplasmic side. A helical membrane pass occupies residues 991-1011 (IFDFIQLLLIVIGAIAVVAVL). Residues 1012–1013 (QP) lie on the Extracellular side of the membrane. Residues 1014 to 1034 (YIFVATVPVIVAFIMLRAYFL) form a helical membrane-spanning segment. Residues 1035 to 1095 (QTSQQLKQLE…TANWFLYLST (61 aa)) lie on the Cytoplasmic side of the membrane. A helical transmembrane segment spans residues 1096-1116 (LRWFQMRIEMIFVIFFIAVTF). Residues 1117-1130 (ISILTTGEGEGTVG) lie on the Extracellular side of the membrane. Residues 1131–1151 (IILTLAMNIMSTLQWAVNSSI) traverse the membrane as a helical segment. Residues 1152–1481 (DVDSLMRSVS…TEEEVQDTRL (330 aa)) are Cytoplasmic-facing. Residues 1211–1444 (MTVKDLTAKY…RSLFRQAISP (234 aa)) form the ABC transporter 2 domain. Residues Tyr1220 and 1245-1252 (GRTGSGKS) each bind ATP. An interaction with GORASP2 region spans residues 1387–1481 (RTLKQAFADC…TEEEVQDTRL (95 aa)). Cys1396 is lipidated: S-palmitoyl cysteine. A phosphoserine mark is found at Ser1445 and Ser1457. The PDZ-binding motif lies at 1479-1481 (TRL).

It belongs to the ABC transporter superfamily. ABCC family. CFTR transporter (TC 3.A.1.202) subfamily. In terms of assembly, monomer; does not require oligomerization for channel activity. May form oligomers in the membrane. Interacts with SLC26A3, SLC26A6 and NHERF1. Interacts with SHANK2. Interacts with MYO6. Interacts (via C-terminus) with GOPC (via PDZ domain); this promotes CFTR internalization and thereby decreases channel activity. Interacts with SLC4A7 through NHERF1. Found in a complex with MYO5B and RAB11A. Interacts with ANO1. Interacts with SLC26A8. Interacts with AHCYL1; the interaction increases CFTR activity. Interacts with CSE1L. The core-glycosylated form interacts with GORASP2 (via PDZ GRASP-type 1 domain) in respone to ER stress. Interacts with MARCHF2; the interaction leads to CFTR ubiqtuitination and degradation. Interacts with ADGRG2. In terms of processing, N-glycosylated. Post-translationally, phosphorylated; cAMP treatment promotes phosphorylation and activates the channel. Dephosphorylation decreases the ATPase activity (in vitro). Phosphorylation at PKA sites activates the channel. Phosphorylation at PKC sites enhances the response to phosphorylation by PKA. Phosphorylated by AMPK; this inhibits channel activity. Ubiquitinated, leading to its degradation in the lysosome. Deubiquitination by USP10 in early endosomes enhances its endocytic recycling to the cell membrane. Ubiquitinated by RNF185 during ER stress. Ubiquitinated by MARCHF2.

The protein resides in the apical cell membrane. It localises to the early endosome membrane. Its subcellular location is the cell membrane. The protein localises to the recycling endosome membrane. It is found in the endoplasmic reticulum membrane. The protein resides in the nucleus. The catalysed reaction is ATP + H2O + closed Cl(-) channel = ADP + phosphate + open Cl(-) channel.. The enzyme catalyses chloride(in) = chloride(out). It catalyses the reaction hydrogencarbonate(in) = hydrogencarbonate(out). It carries out the reaction ATP + H2O = ADP + phosphate + H(+). In terms of biological role, epithelial ion channel that plays an important role in the regulation of epithelial ion and water transport and fluid homeostasis. Mediates the transport of chloride ions across the cell membrane. Possesses an intrinsic ATPase activity and utilizes ATP to gate its channel; the passive flow of anions through the channel is gated by cycles of ATP binding and hydrolysis by the ATP-binding domains. The ion channel is also permeable to HCO(3)(-); selectivity depends on the extracellular chloride concentration. Exerts its function also by modulating the activity of other ion channels and transporters. Contributes to the regulation of the pH and the ion content of the epithelial fluid layer. Modulates the activity of the epithelial sodium channel (ENaC) complex, in part by regulating the cell surface expression of the ENaC complex. May regulate bicarbonate secretion and salvage in epithelial cells by regulating the transporter SLC4A7. Can inhibit the chloride channel activity of ANO1. Plays a role in the chloride and bicarbonate homeostasis during sperm epididymal maturation and capacitation. The sequence is that of Cystic fibrosis transmembrane conductance regulator from Macaca fascicularis (Crab-eating macaque).